Reading from the N-terminus, the 661-residue chain is 7-beta-hydroxy-3-oxochol-24-oyl-CoA 4-desaturase (661 aa).

Gln-104 lines the FMN pocket. His-168 to His-171 contacts substrate. Tyr-173 serves as the catalytic Proton donor. FMN-binding positions include Arg-222, Lys-298, and Gly-320–Arg-321. 4 residues coordinate [4Fe-4S] cluster: Cys-344, Cys-347, Cys-351, and Cys-363. Gly-394, Glu-413, Gln-421, Lys-431, and Ala-458 together coordinate FAD.

This sequence in the N-terminal section; belongs to the NADH:flavin oxidoreductase/NADH oxidase family. In terms of assembly, homotrimer. The cofactor is FMN. FAD serves as cofactor. Requires [4Fe-4S] cluster as cofactor.

The enzyme catalyses 7beta-hydroxy-3-oxochol-24-oyl-CoA + NAD(+) = 7beta-hydroxy-3-oxochol-4-en-24-oyl-CoA + NADH + H(+). It participates in lipid metabolism; bile acid degradation. Activity is inhibited by sulfhydryl-reactive compounds, acriflavine, o-phenanthroline and EDTA. Its function is as follows. NADH-dependent flavin oxidoreductase. Stereo-specific NAD(H)-dependent 3-oxo-delta4-cholenoic acid oxidoreductase involved in bile acid 7beta-dehydroxylation. The protein is 7-beta-hydroxy-3-oxochol-24-oyl-CoA 4-desaturase of Clostridium scindens (strain JCM 10418 / VPI 12708).